The sequence spans 105 residues: Protein METHYLENE BLUE SENSITIVITY 1 (105 aa).

Residues 26 to 46 form a disordered region; that stretch reads RGGGKAGIADRTGKEKGGHAK. Over residues 36–46 the composition is skewed to basic and acidic residues; that stretch reads RTGKEKGGHAK.

As to expression, mainly expressed in the epidermis.

It localises to the nucleus. It is found in the cytoplasm. The protein resides in the stress granule. Functionally, required for acclimation to reactive oxygen species (ROS) responses downstream of beta-cyclocitral (beta-cc) or mediated by dihydroactinidiolide, including singlet oxygen 1O(2) detoxification reactions, especially upon light-mediated photooxidative stress, and leading to programmed cell death. Prevents leaf senescence. Involved in cold acclimation. This Arabidopsis thaliana (Mouse-ear cress) protein is Protein METHYLENE BLUE SENSITIVITY 1.